A 474-amino-acid chain; its full sequence is Glycogen synthase (474 aa).

K15 contacts ADP-alpha-D-glucose.

It belongs to the glycosyltransferase 1 family. Bacterial/plant glycogen synthase subfamily.

The catalysed reaction is [(1-&gt;4)-alpha-D-glucosyl](n) + ADP-alpha-D-glucose = [(1-&gt;4)-alpha-D-glucosyl](n+1) + ADP + H(+). Its pathway is glycan biosynthesis; glycogen biosynthesis. Its function is as follows. Synthesizes alpha-1,4-glucan chains using ADP-glucose. The chain is Glycogen synthase from Chlamydia muridarum (strain MoPn / Nigg).